A 66-amino-acid polypeptide reads, in one-letter code: Large ribosomal subunit protein uL30 (66 aa).

The protein belongs to the universal ribosomal protein uL30 family. As to quaternary structure, part of the 50S ribosomal subunit.

The protein is Large ribosomal subunit protein uL30 of Chelativorans sp. (strain BNC1).